The chain runs to 391 residues: Digeranylgeranylglycerophospholipid reductase (391 aa).

Positions 18, 37, 48, 49, 51, 98, 122, 279, 291, and 292 each coordinate FAD.

It belongs to the geranylgeranyl reductase family. DGGGPL reductase subfamily. FAD serves as cofactor.

The enzyme catalyses a 2,3-bis-O-phytanyl-sn-glycerol 1-phospholipid + 8 A = a 2,3-bis-O-(geranylgeranyl)-sn-glycerol 1-phospholipid + 8 AH2. The catalysed reaction is 2,3-bis-O-(phytanyl)-sn-glycerol 1-phosphate + 8 A = 2,3-bis-O-(geranylgeranyl)-sn-glycerol 1-phosphate + 8 AH2. It carries out the reaction CDP-2,3-bis-O-(geranylgeranyl)-sn-glycerol + 8 AH2 = CDP-2,3-bis-O-(phytanyl)-sn-glycerol + 8 A. It catalyses the reaction archaetidylserine + 8 AH2 = 2,3-bis-O-phytanyl-sn-glycero-3-phospho-L-serine + 8 A. Its pathway is membrane lipid metabolism; glycerophospholipid metabolism. Is involved in the reduction of 2,3-digeranylgeranylglycerophospholipids (unsaturated archaeols) into 2,3-diphytanylglycerophospholipids (saturated archaeols) in the biosynthesis of archaeal membrane lipids. Catalyzes the formation of archaetidic acid (2,3-di-O-phytanyl-sn-glyceryl phosphate) from 2,3-di-O-geranylgeranylglyceryl phosphate (DGGGP) via the hydrogenation of each double bond of the isoprenoid chains. Is also probably able to reduce double bonds of geranyl groups in CDP-2,3-bis-O-(geranylgeranyl)-sn-glycerol and archaetidylserine, thus acting at various stages in the biosynthesis of archaeal membrane lipids. In Methanocaldococcus jannaschii (strain ATCC 43067 / DSM 2661 / JAL-1 / JCM 10045 / NBRC 100440) (Methanococcus jannaschii), this protein is Digeranylgeranylglycerophospholipid reductase.